A 994-amino-acid chain; its full sequence is Transposase for transposon Tn2501 (994 aa).

The protein belongs to the transposase 7 family.

Functionally, required for transposition of transposon Tn2501. The chain is Transposase for transposon Tn2501 (tnpA) from Escherichia coli.